The chain runs to 1302 residues: Ubiquitin conjugation factor E4 B (1302 aa).

Met-1 carries the N-acetylmethionine modification. The segment at 1–155 (MEELSADEIR…EPSSGPEVSE (155 aa)) is disordered. Low complexity predominate over residues 16–33 (RLAGGQTSQPTTPLTSPQ). Phosphoserine occurs at positions 23 and 31. Over residues 51–64 (QSLGLNVHNMTPAT) the composition is skewed to polar residues. Residues 76–99 (SQSSEGVSSLSSSPSNSLETQSQS) show a composition bias toward low complexity. A phosphoserine mark is found at Ser-84, Ser-88, Ser-90, Ser-101, Ser-103, Ser-105, and Ser-124. The segment covering 134 to 147 (NDRREKRSLSDKEP) has biased composition (basic and acidic residues). A Phosphoserine modification is found at Ser-238. Residues 299–327 (AASQLAVPSTPLSPHSAASGTAAGSQPSS) show a composition bias toward polar residues. The disordered stretch occupies residues 299–406 (AASQLAVPST…SPSLGASGGA (108 aa)). Positions 340 to 374 (ASSGVSILSSSPSPPALASSPQAVPASSSRQRPSS) are enriched in low complexity. Residue Ser-383 is modified to Phosphoserine. Residues 384–400 (PSATSRRPSSLRISPSL) show a composition bias toward low complexity. 2 positions are modified to phosphoserine: Ser-803 and Ser-969. The interval 1057-1077 (NKEQWDQLPRDQQQARQSQLA) is disordered. The segment covering 1066-1077 (RDQQQARQSQLA) has biased composition (low complexity). In terms of domain architecture, U-box spans 1227 to 1300 (DAPDEFRDPL…QAWMREKQNS (74 aa)). Ser-1265 carries the phosphoserine modification.

The protein belongs to the ubiquitin conjugation factor E4 family. In terms of assembly, interacts with VCP/p97. Interacts with STUB1/CHIP and UNC45B. Proteolytically cleaved by caspases during apoptosis. Cleaved efficiently at Asp-123 by caspase-6 and granzyme B. Cleaved with approximately 10-fold less efficiency at Asp-109 by caspase-3 and caspase-7. In terms of tissue distribution, expressed in differentiated myotubes (at protein level). Highest expression in ovary, testis, heart and skeletal muscle. Expression is low in colon, thymus and peripheral blood leukocytes. Almost undetectable in lung and spleen.

The protein resides in the cytoplasm. It is found in the nucleus. The catalysed reaction is S-ubiquitinyl-[E2 ubiquitin-conjugating enzyme]-L-cysteine + [acceptor protein]-L-lysine = [E2 ubiquitin-conjugating enzyme]-L-cysteine + N(6)-ubiquitinyl-[acceptor protein]-L-lysine.. Its pathway is protein modification; protein ubiquitination. In terms of biological role, ubiquitin-protein ligase that probably functions as an E3 ligase in conjunction with specific E1 and E2 ligases. May also function as an E4 ligase mediating the assembly of polyubiquitin chains on substrates ubiquitinated by another E3 ubiquitin ligase. May regulate myosin assembly in striated muscles together with STUB1 and VCP/p97 by targeting myosin chaperone UNC45B for proteasomal degradation. In Homo sapiens (Human), this protein is Ubiquitin conjugation factor E4 B.